The primary structure comprises 118 residues: HTH-type transcriptional regulator SarT (118 aa).

Residues 55-78 (MRDIISYIGIDQSRIVKSVKDLSK) constitute a DNA-binding region (H-T-H motif).

The protein belongs to the SarA family.

Its subcellular location is the cytoplasm. In terms of biological role, transcriptional regulator acting as an intermediary between major regulators sarA and agr and virulence genes. Represses alpha-hemolysin (hla) gene expression. Down-regulates agr RNAIII expression by repressing sarU, a positive activator of agr expression. Up-regulates sarS, which induces the expression of the cell wall-associated protein A (spa). This chain is HTH-type transcriptional regulator SarT (sarT), found in Staphylococcus aureus (strain NCTC 8325 / PS 47).